The following is a 196-amino-acid chain: Putative NADH dehydrogenase/NAD(P)H nitroreductase Smlt0482 (196 aa).

The protein belongs to the nitroreductase family. HadB/RutE subfamily. The cofactor is FMN.

This is Putative NADH dehydrogenase/NAD(P)H nitroreductase Smlt0482 from Stenotrophomonas maltophilia (strain K279a).